The following is a 1024-amino-acid chain: SAC3 family protein 1 (1024 aa).

The tract at residues 1–62 (MEKRNETGNN…QDSRQKRFSS (62 aa)) is disordered. The segment covering 11–21 (RLKRSNNRGKS) has biased composition (basic residues). A compositionally biased stretch (basic and acidic residues) spans 22–38 (KKDWKDASVETTPRETS). Over residues 39-52 (VDEDNTSVFEDVEA) the composition is skewed to acidic residues. The 191-residue stretch at 243–433 (EVEQLRKGIL…NKTAFFNDSK (191 aa)) folds into the PCI domain. Ser841 carries the phosphoserine modification. Residues 945–1022 (AQLEELEVVR…ARDLLKKVET (78 aa)) adopt a coiled-coil conformation.

It belongs to the SAC3 family.

The protein localises to the cytoplasm. The protein resides in the nucleus envelope. This chain is SAC3 family protein 1, found in Schizosaccharomyces pombe (strain 972 / ATCC 24843) (Fission yeast).